A 314-amino-acid polypeptide reads, in one-letter code: Carbamate kinase (314 aa).

The protein belongs to the carbamate kinase family. Homodimer.

The protein resides in the cytoplasm. The catalysed reaction is hydrogencarbonate + NH4(+) + ATP = carbamoyl phosphate + ADP + H2O + H(+). It participates in metabolic intermediate metabolism; carbamoyl phosphate degradation; CO(2) and NH(3) from carbamoyl phosphate: step 1/1. The protein is Carbamate kinase (arcC) of Clostridium perfringens (strain 13 / Type A).